The following is a 547-amino-acid chain: RING finger protein ETP1 homolog (547 aa).

The segment at 208–248 adopts an RING-type zinc-finger fold; it reads CVVCLERMDSSITGLITIVCQHTFHCPCLQKWGNSSCPVCR. A UBP-type; degenerate zinc finger spans residues 245-338; the sequence is PVCRYTQKVQ…GKLVELSTDG (94 aa). Zn(2+)-binding residues include cysteine 262, cysteine 265, cysteine 274, cysteine 277, cysteine 282, histidine 289, histidine 293, and histidine 299. Polar residues predominate over residues 514–523; the sequence is LPNNSTVRSN. Residues 514–547 are disordered; sequence LPNNSTVRSNSVKSKKKKKKKPVVPSSSGSLGTD. The span at 526–535 shows a compositional bias: basic residues; it reads KSKKKKKKKP.

The protein resides in the cytoplasm. In terms of biological role, may act as a cytoplasmic retention protein with a role in regulating nuclear transport. This is RING finger protein ETP1 homolog from Schizosaccharomyces pombe (strain 972 / ATCC 24843) (Fission yeast).